Consider the following 331-residue polypeptide: Phosphate acyltransferase (331 aa).

Belongs to the PlsX family. As to quaternary structure, homodimer. Probably interacts with PlsY.

The protein resides in the cytoplasm. The enzyme catalyses a fatty acyl-[ACP] + phosphate = an acyl phosphate + holo-[ACP]. The protein operates within lipid metabolism; phospholipid metabolism. Catalyzes the reversible formation of acyl-phosphate (acyl-PO(4)) from acyl-[acyl-carrier-protein] (acyl-ACP). This enzyme utilizes acyl-ACP as fatty acyl donor, but not acyl-CoA. This chain is Phosphate acyltransferase, found in Exiguobacterium sibiricum (strain DSM 17290 / CCUG 55495 / CIP 109462 / JCM 13490 / 255-15).